Here is a 782-residue protein sequence, read N- to C-terminus: Coiled-coil alpha-helical rod protein 1 (782 aa).

Basic and acidic residues-rich tracts occupy residues Glu62–Arg74 and Glu208–Leu218. Disordered regions lie at residues Glu62 to Glu82 and Ser191 to Leu218. Coiled-coil stretches lie at residues Glu82–Arg314, Leu344–Ala435, and Val498–Gly691.

It localises to the cytoplasm. Its subcellular location is the nucleus. Its function is as follows. May be a regulator of keratinocyte proliferation or differentiation. This Pongo pygmaeus (Bornean orangutan) protein is Coiled-coil alpha-helical rod protein 1 (CCHCR1).